The primary structure comprises 571 residues: Dehydrocurvularin exporter (571 aa).

The segment at 1–34 (MADGSDLENNHKPELDRSQPGSTSNGSQEQKDPD) is disordered. A compositionally biased stretch (basic and acidic residues) spans 8-17 (ENNHKPELDR). Residues 19–28 (QPGSTSNGSQ) show a composition bias toward polar residues. N25 carries N-linked (GlcNAc...) asparagine glycosylation. Helical transmembrane passes span 47–67 (ILVM…IGII), 86–106 (WYGS…GKLF), 120–140 (FIFL…SVII), 143–163 (AIQG…INYV), 171–191 (LLIG…PVIG), 202–222 (WCFW…LLFL), 238–258 (IILA…VCLT), 275–295 (VIAT…TEWF), 317–337 (LFCL…PIYF), 350–370 (VNTL…GGVI), 379–399 (FELL…ILDV), 405–425 (MYIG…QIPM), 443–463 (IMVM…QSLF), and 514–534 (VFAF…IIPF). The interval 538–571 (PDHGKKDKPATEEAAEEKSEAEGKVSGDKEENHS) is disordered.

The protein belongs to the major facilitator superfamily. TCR/Tet family.

It is found in the cell membrane. In terms of biological role, efflux pump that is probably involved in the export of dehydrocurvularin. In Aspergillus terreus, this protein is Dehydrocurvularin exporter.